A 343-amino-acid chain; its full sequence is Small ribosomal subunit biogenesis GTPase RsgA (343 aa).

In terms of domain architecture, CP-type G spans 116-275; the sequence is RGQLKPVAAN…LIDSPGIREF (160 aa). GTP is bound by residues 163-166 and 217-225; these read NKAD and GQSGVGKSS. The Zn(2+) site is built by Cys299, Cys304, His306, and Cys312.

The protein belongs to the TRAFAC class YlqF/YawG GTPase family. RsgA subfamily. In terms of assembly, monomer. Associates with 30S ribosomal subunit, binds 16S rRNA. Requires Zn(2+) as cofactor.

It localises to the cytoplasm. Its function is as follows. One of several proteins that assist in the late maturation steps of the functional core of the 30S ribosomal subunit. Helps release RbfA from mature subunits. May play a role in the assembly of ribosomal proteins into the subunit. Circularly permuted GTPase that catalyzes slow GTP hydrolysis, GTPase activity is stimulated by the 30S ribosomal subunit. The protein is Small ribosomal subunit biogenesis GTPase RsgA of Ectopseudomonas mendocina (strain ymp) (Pseudomonas mendocina).